The chain runs to 321 residues: Methionyl-tRNA formyltransferase (321 aa).

Residue 113 to 116 (SILP) coordinates (6S)-5,6,7,8-tetrahydrofolate.

It belongs to the Fmt family.

It catalyses the reaction L-methionyl-tRNA(fMet) + (6R)-10-formyltetrahydrofolate = N-formyl-L-methionyl-tRNA(fMet) + (6S)-5,6,7,8-tetrahydrofolate + H(+). Attaches a formyl group to the free amino group of methionyl-tRNA(fMet). The formyl group appears to play a dual role in the initiator identity of N-formylmethionyl-tRNA by promoting its recognition by IF2 and preventing the misappropriation of this tRNA by the elongation apparatus. This is Methionyl-tRNA formyltransferase from Pseudoalteromonas translucida (strain TAC 125).